Reading from the N-terminus, the 171-residue chain is Protein FAM209A (171 aa).

Residues 1-19 (MWTLKSSLVLLLCLTCSYA) form the signal peptide. The Extracellular portion of the chain corresponds to 20–52 (FMFSSLRQKTSEPQGKVQYGEHFRIRQNLPEHT). Residues 53 to 73 (QGWLGSKWLWLLFVVVPFVIL) traverse the membrane as a helical segment. At 74–171 (QCQRDSEKNK…CEIWGEESSS (98 aa)) the chain is on the cytoplasmic side. The tract at residues 81–107 (KNKEQSPPGLRGGQLHSPLKKKRNASP) is disordered. A coiled-coil region spans residues 114–139 (NTLMELEVELMKFVSKVRNLKRAMAT).

Belongs to the FAM209 family. Interacts with DPY19L2. Interacts with CYLC1; the interaction may be relevant for proper acrosome attachment to the nuclear envelope.

The protein localises to the nucleus inner membrane. Functionally, may play a role in sperm acrosome biogenesis. This chain is Protein FAM209A, found in Homo sapiens (Human).